We begin with the raw amino-acid sequence, 586 residues long: Protein translocase subunit SecD (586 aa).

The next 6 helical transmembrane spans lie at 7–27, 418–438, 439–459, 465–485, 521–541, and 546–566; these read LILI…TLKW, SALA…LSGV, VAGF…LSAF, LTSI…NIVI, TFIA…GFAW, and GIVA…EFII.

It belongs to the SecD/SecF family. SecD subfamily. In terms of assembly, forms a complex with SecF. Part of the essential Sec protein translocation apparatus which comprises SecA, SecYEG and auxiliary proteins SecDF. Other proteins may also be involved.

It localises to the cell inner membrane. Part of the Sec protein translocase complex. Interacts with the SecYEG preprotein conducting channel. SecDF uses the proton motive force (PMF) to complete protein translocation after the ATP-dependent function of SecA. The chain is Protein translocase subunit SecD from Borreliella burgdorferi (strain ATCC 35210 / DSM 4680 / CIP 102532 / B31) (Borrelia burgdorferi).